The primary structure comprises 67 residues: Large ribosomal subunit protein uL29 (67 aa).

This sequence belongs to the universal ribosomal protein uL29 family.

In Wolbachia pipientis subsp. Culex pipiens (strain wPip), this protein is Large ribosomal subunit protein uL29.